Here is a 631-residue protein sequence, read N- to C-terminus: Probable potassium transport system protein Kup (631 aa).

Transmembrane regions (helical) follow at residues 17 to 37 (IGLL…SPLY), 56 to 76 (ILGV…FKYM), 109 to 129 (MMMV…SMIT), 147 to 167 (GLDH…FLIQ), 174 to 194 (IGVL…ALGV), 215 to 235 (FFII…LALT), 256 to 276 (WFIL…ALVL), 288 to 308 (LLAP…ATII), 346 to 366 (IYIG…VIGF), 378 to 398 (VAVT…MLML), 403 to 423 (PLLA…FFAA), and 428 to 448 (IFQG…LMTT).

The protein belongs to the HAK/KUP transporter (TC 2.A.72) family.

It localises to the cell inner membrane. It carries out the reaction K(+)(in) + H(+)(in) = K(+)(out) + H(+)(out). In terms of biological role, transport of potassium into the cell. Likely operates as a K(+):H(+) symporter. This chain is Probable potassium transport system protein Kup, found in Pseudomonas savastanoi pv. phaseolicola (strain 1448A / Race 6) (Pseudomonas syringae pv. phaseolicola (strain 1448A / Race 6)).